Reading from the N-terminus, the 91-residue chain is ATP synthase subunit c (91 aa).

The next 2 membrane-spanning stretches (helical) occupy residues 4-24 and 53-73; these read FTMC…GTGI and IGLA…LIIL.

The protein belongs to the ATPase C chain family. As to quaternary structure, F-type ATPases have 2 components, F(1) - the catalytic core - and F(0) - the membrane proton channel. F(1) has five subunits: alpha(3), beta(3), gamma(1), delta(1), epsilon(1). F(0) has three main subunits: a(1), b(2) and c(10-14). The alpha and beta chains form an alternating ring which encloses part of the gamma chain. F(1) is attached to F(0) by a central stalk formed by the gamma and epsilon chains, while a peripheral stalk is formed by the delta and b chains.

It is found in the cell inner membrane. Its function is as follows. F(1)F(0) ATP synthase produces ATP from ADP in the presence of a proton or sodium gradient. F-type ATPases consist of two structural domains, F(1) containing the extramembraneous catalytic core and F(0) containing the membrane proton channel, linked together by a central stalk and a peripheral stalk. During catalysis, ATP synthesis in the catalytic domain of F(1) is coupled via a rotary mechanism of the central stalk subunits to proton translocation. In terms of biological role, key component of the F(0) channel; it plays a direct role in translocation across the membrane. A homomeric c-ring of between 10-14 subunits forms the central stalk rotor element with the F(1) delta and epsilon subunits. In Geotalea daltonii (strain DSM 22248 / JCM 15807 / FRC-32) (Geobacter daltonii), this protein is ATP synthase subunit c.